Consider the following 731-residue polypeptide: Replication restart protein PriA (731 aa).

Positions 1–98 (MSVAHVALPV…HPIGDVLFHA (98 aa)) are 3'BD. A WH region spans residues 115–177 (WYWFATEQGQ…RGKGLAELAC (63 aa)). The interval 200 to 375 (TEQATAVGAI…VRQGKYRQLT (176 aa)) is helicase lobe 1. A Helicase ATP-binding domain is found at 210-376 (HSAADRFSAW…RQGKYRQLTL (167 aa)). An ATP-binding site is contributed by 223–230 (GITGSGKT). Residues glycine 226, glycine 228, lysine 229, threonine 230, glutamate 231, and arginine 263 each contribute to the ADP site. The short motif at 319–322 (DEEH) is the DEAH box element. The short motif at 326–340 (YKQQEGWRYHARDLA) is the Aromatic-rich loop (ARL) element. The tract at residues 387 to 430 (QQHVLDLKGQPLQAGLSPALISRMRQHLQADNQVILFLNRRGFA) is helicase lobe 2, N-terminus. A CRR region spans residues 431–485 (PALLCHDCGWIAECPRCDSYYTLHQAQHHLRCHHCDSQRPIPRQCPSCGSTHLVP). Positions 435, 438, 444, 447, 462, 465, 475, and 478 each coordinate Zn(2+). The Helicase C-terminal domain occupies 470-637 (PIPRQCPSCG…QLPPWTSHVL (168 aa)). A helicase lobe 2, C-terminus region spans residues 486-626 (VGIGTEQLEQ…AEQALAERQT (141 aa)). Lysine 543 is a binding site for ADP. Residues 633 to 731 (TSHVLIRAED…WVLDVDPIEG (99 aa)) are CTD.

Belongs to the helicase family. PriA subfamily. As to quaternary structure, binds SSB. Component of the replication restart primosome. It depends on Zn(2+) as a cofactor.

It carries out the reaction Couples ATP hydrolysis with the unwinding of duplex DNA by translocating in the 3'-5' direction.. The enzyme catalyses ATP + H2O = ADP + phosphate + H(+). ATPase activity is stimulated by single-stranded binding protein (SSB). Its function is as follows. Initiates the restart of stalled replication forks, which reloads the replicative helicase on sites other than the origin of replication. Recognizes and binds to abandoned replication forks and remodels them to uncover a helicase loading site. Promotes assembly of the primosome at these replication forks. Recognizes abandoned replication forks and remodels SSB on ssDNA to uncover a loading site for DnaB. Binds replication fork DNA, has DNA-dependent ATPase activity in the presence of replication fork DNA, restores normal cell growth and SOS induction to E.coli mutant pirA304. In Klebsiella pneumoniae subsp. pneumoniae (strain ATCC 700721 / MGH 78578), this protein is Replication restart protein PriA.